A 246-amino-acid polypeptide reads, in one-letter code: UPF0736 protein Aflv_2136 (246 aa).

The protein belongs to the UPF0736 family.

In Anoxybacillus flavithermus (strain DSM 21510 / WK1), this protein is UPF0736 protein Aflv_2136.